Consider the following 446-residue polypeptide: Corrinoid/iron-sulfur protein large subunit (446 aa).

Positions 2-59 constitute a 4Fe-4S domain; that stretch reads PLTGLEIYKQLPKKNCGECGTPTCLAFAMNLASGKASLDSCPYVSDAAREALDAAAAP. Residues Cys-17, Cys-20, Cys-25, and Cys-42 each contribute to the [4Fe-4S] cluster site. 5-methoxybenzimidazolylcob(I)amide is bound by residues Thr-340, Thr-346, 370–373, and Ala-433; that span reads GLSV.

In terms of assembly, heterohexamer composed of 2 subunits of AcsC, 2 subunits of AcsD and 2 subunits of AcsE. It depends on [4Fe-4S] cluster as a cofactor.

Functionally, acts as a methyl group carrier in the anaerobic acetyl-CoA pathway (Wood-Ljungdahl pathway) of carbon monoxide and carbon dioxide fixation. Binds the corrinoid 5-methoxybenzimidazolylcobamide which is then methylated by the AcsE subunit. The protein is Corrinoid/iron-sulfur protein large subunit (acsC) of Moorella thermoacetica (Clostridium thermoaceticum).